Consider the following 487-residue polypeptide: MKKLDQLTFDNRFARLGDAFSTEVLPEPIEQPRLVVASSDAMALLDLDPAEAQREEFAELFAGHKLWGEAEPRAMVYSGHQFGGYTPRLGDGRGLLLGEVVNAAGEHWDLHLKGAGQTPYSRMGDGRAVLRSSIREFLASEHLHALGIPSSRALCVTTSDTPVWREKQERAAMVLRLAPSHVRFGHFEYFYYTRQHEQLKVLGEHVLANHFPQCLTQDEPWLAMFREVLERTAAMIAHWQAYGFCHGVMNTDNMSILGITFDYGPYAFLDDFDANHICNHSDDTGRYSFSNQVPIAHWNLAALAQALTPMIEVEKLRETLELFLPLYQAHYLDLMRKRLGLTSAEDDDEALVQRLLQLMQQGKATDYSLFFRQLGEQAPADALQVVRNDFVDLAGFDAWGRDYLARCEREGQQQDERRARMHAVNPLYILRNYLAQQVIEAAEAGDYGPVRELHAVLSRPFDEQPGMQRYAQRPPEWGKHLEISCSS.

ATP contacts are provided by G90, G92, R93, K113, D125, G126, R176, and R183. The active-site Proton acceptor is the D252. Mg(2+)-binding residues include N253 and D262. Residue D262 participates in ATP binding.

Belongs to the SELO family. Mg(2+) serves as cofactor. Requires Mn(2+) as cofactor.

It carries out the reaction L-seryl-[protein] + ATP = 3-O-(5'-adenylyl)-L-seryl-[protein] + diphosphate. The enzyme catalyses L-threonyl-[protein] + ATP = 3-O-(5'-adenylyl)-L-threonyl-[protein] + diphosphate. It catalyses the reaction L-tyrosyl-[protein] + ATP = O-(5'-adenylyl)-L-tyrosyl-[protein] + diphosphate. The catalysed reaction is L-histidyl-[protein] + UTP = N(tele)-(5'-uridylyl)-L-histidyl-[protein] + diphosphate. It carries out the reaction L-seryl-[protein] + UTP = O-(5'-uridylyl)-L-seryl-[protein] + diphosphate. The enzyme catalyses L-tyrosyl-[protein] + UTP = O-(5'-uridylyl)-L-tyrosyl-[protein] + diphosphate. In terms of biological role, nucleotidyltransferase involved in the post-translational modification of proteins. It can catalyze the addition of adenosine monophosphate (AMP) or uridine monophosphate (UMP) to a protein, resulting in modifications known as AMPylation and UMPylation. The sequence is that of Protein nucleotidyltransferase YdiU from Ectopseudomonas mendocina (strain ymp) (Pseudomonas mendocina).